We begin with the raw amino-acid sequence, 461 residues long: Kremen protein 2 (461 aa).

The N-terminal stretch at M1–A24 is a signal peptide. At G25–S363 the chain is on the extracellular side. Residues E34–C118 enclose the Kringle domain. 3 disulfide bridges follow: C35-C118, C59-C99, and C88-C113. N48 carries an N-linked (GlcNAc...) asparagine glycan. Residues M120–S214 form the WSC domain. C218 and C244 are joined by a disulfide. Residues C218–L325 enclose the CUB domain. N-linked (GlcNAc...) asparagine glycosylation is found at N221, N243, and N350. The disordered stretch occupies residues V329–P357. A helical transmembrane segment spans residues I364–L386. Topologically, residues R387–L461 are cytoplasmic. A disordered region spans residues C429–S452.

Interacts with ERLEC1. Forms a ternary complex with DKK1 and LRP6.

The protein resides in the membrane. Its function is as follows. Receptor for Dickkopf proteins. Cooperates with DKK1/2 to inhibit Wnt/beta-catenin signaling by promoting the endocytosis of Wnt receptors LRP5 and LRP6. Plays a role in limb development; attenuates Wnt signaling in the developing limb to allow normal limb patterning and can also negatively regulate bone formation. The protein is Kremen protein 2 (Kremen2) of Mus musculus (Mouse).